The following is a 363-amino-acid chain: Ribosomal RNA large subunit methyltransferase M (363 aa).

S-adenosyl-L-methionine is bound by residues Ser-190, 223 to 226, Asp-242, Asp-262, and Asp-279; that span reads CPGG. Lys-308 (proton acceptor) is an active-site residue.

The protein belongs to the class I-like SAM-binding methyltransferase superfamily. RNA methyltransferase RlmE family. RlmM subfamily. Monomer.

It localises to the cytoplasm. The catalysed reaction is cytidine(2498) in 23S rRNA + S-adenosyl-L-methionine = 2'-O-methylcytidine(2498) in 23S rRNA + S-adenosyl-L-homocysteine + H(+). In terms of biological role, catalyzes the 2'-O-methylation at nucleotide C2498 in 23S rRNA. The chain is Ribosomal RNA large subunit methyltransferase M from Aliivibrio salmonicida (strain LFI1238) (Vibrio salmonicida (strain LFI1238)).